Here is a 376-residue protein sequence, read N- to C-terminus: Queuine tRNA-ribosyltransferase (376 aa).

D92 serves as the catalytic Proton acceptor. Substrate is bound by residues 92-96 (DSGGF), D146, Q190, and G217. Positions 248-254 (GVGRPED) are RNA binding. Residue D267 is the Nucleophile of the active site. Positions 272-276 (TRNAR) are RNA binding; important for wobble base 34 recognition. C305, C307, C310, and H337 together coordinate Zn(2+).

Belongs to the queuine tRNA-ribosyltransferase family. In terms of assembly, homodimer. Within each dimer, one monomer is responsible for RNA recognition and catalysis, while the other monomer binds to the replacement base PreQ1. Requires Zn(2+) as cofactor.

It catalyses the reaction 7-aminomethyl-7-carbaguanine + guanosine(34) in tRNA = 7-aminomethyl-7-carbaguanosine(34) in tRNA + guanine. Its pathway is tRNA modification; tRNA-queuosine biosynthesis. Functionally, catalyzes the base-exchange of a guanine (G) residue with the queuine precursor 7-aminomethyl-7-deazaguanine (PreQ1) at position 34 (anticodon wobble position) in tRNAs with GU(N) anticodons (tRNA-Asp, -Asn, -His and -Tyr). Catalysis occurs through a double-displacement mechanism. The nucleophile active site attacks the C1' of nucleotide 34 to detach the guanine base from the RNA, forming a covalent enzyme-RNA intermediate. The proton acceptor active site deprotonates the incoming PreQ1, allowing a nucleophilic attack on the C1' of the ribose to form the product. After dissociation, two additional enzymatic reactions on the tRNA convert PreQ1 to queuine (Q), resulting in the hypermodified nucleoside queuosine (7-(((4,5-cis-dihydroxy-2-cyclopenten-1-yl)amino)methyl)-7-deazaguanosine). This is Queuine tRNA-ribosyltransferase from Stenotrophomonas maltophilia (strain K279a).